Reading from the N-terminus, the 335-residue chain is RVS161-like protein RVS162 (335 aa).

Residues 17-310 (VMLKTGHIEQ…LDAQTRQDYI (294 aa)) enclose the BAR domain. Residues 30-56 (KEYEFQEKRYRTMEENSIKLQKNLRLY) are a coiled coil. Residues 105–127 (HEEEGEEKEEEENDNTTTTTTTT) form a disordered region. Residues 107-118 (EEGEEKEEEEND) are compositionally biased toward acidic residues. The stretch at 222–259 (TNIIELNHNQYEEKLKIYNQELTEVESKYVEINNQLLI) forms a coiled coil.

It localises to the cytoplasm. Its subcellular location is the cytoskeleton. Component of a cytoskeletal structure that is required for membrane curvature. This Candida albicans (strain SC5314 / ATCC MYA-2876) (Yeast) protein is RVS161-like protein RVS162.